We begin with the raw amino-acid sequence, 406 residues long: Tyrosine--tRNA ligase (406 aa).

Tyr-35 serves as a coordination point for L-tyrosine. The 'HIGH' region motif lies at 40–49 (ATSTSLHIGH). L-tyrosine-binding residues include Tyr-166 and Gln-170. The short motif at 226 to 230 (KMGKS) is the 'KMSKS' region element. Residue Lys-229 participates in ATP binding. In terms of domain architecture, S4 RNA-binding spans 341–405 (ILLVDLMVSS…IGKKKILRII (65 aa)).

The protein belongs to the class-I aminoacyl-tRNA synthetase family. TyrS type 1 subfamily. As to quaternary structure, homodimer.

The protein localises to the cytoplasm. It catalyses the reaction tRNA(Tyr) + L-tyrosine + ATP = L-tyrosyl-tRNA(Tyr) + AMP + diphosphate + H(+). In terms of biological role, catalyzes the attachment of tyrosine to tRNA(Tyr) in a two-step reaction: tyrosine is first activated by ATP to form Tyr-AMP and then transferred to the acceptor end of tRNA(Tyr). The chain is Tyrosine--tRNA ligase from Borrelia hermsii (strain HS1 / DAH).